The following is a 95-amino-acid chain: Large ribosomal subunit protein uL23 (95 aa).

The protein belongs to the universal ribosomal protein uL23 family. As to quaternary structure, part of the 50S ribosomal subunit. Contacts protein L29, and trigger factor when it is bound to the ribosome.

Its function is as follows. One of the early assembly proteins it binds 23S rRNA. One of the proteins that surrounds the polypeptide exit tunnel on the outside of the ribosome. Forms the main docking site for trigger factor binding to the ribosome. The protein is Large ribosomal subunit protein uL23 of Syntrophotalea carbinolica (strain DSM 2380 / NBRC 103641 / GraBd1) (Pelobacter carbinolicus).